Here is a 309-residue protein sequence, read N- to C-terminus: Ankyrin repeat and SOCS box protein 12 (309 aa).

ANK repeat units follow at residues 63–92 (VPGT…DVDS), 96–125 (KAQT…SPGG), 129–158 (NNCS…EANV), 171–200 (SCSG…DPDY), and 213–243 (RPRT…NIYL). An SOCS box domain is found at 268–308 (PRSLLSQVRLVVRRALCQAGQPQAINQLDIPPMLISYLKHQ).

This sequence belongs to the ankyrin SOCS box (ASB) family. In terms of assembly, interacts with CUL5 and RNF7.

It functions in the pathway protein modification; protein ubiquitination. In terms of biological role, probable substrate-recognition component of a SCF-like ECS (Elongin-Cullin-SOCS-box protein) E3 ubiquitin-protein ligase complex which mediates the ubiquitination and subsequent proteasomal degradation of target proteins. In Homo sapiens (Human), this protein is Ankyrin repeat and SOCS box protein 12 (ASB12).